The sequence spans 149 residues: MAKKITGYVKLQVPAGAANPSPPIGPALGQRGLNIMEFCKAFNAKTAQIEKGTPIPVIITAYQDRSFTFEMKQPPVSFFLKKAAGMKIGKKPASGSKTPGKGAPAGRISEAQIREIAEKKMPDLNCDSVDSAVAMIRGSARAMGLEITG.

This sequence belongs to the universal ribosomal protein uL11 family. As to quaternary structure, part of the ribosomal stalk of the 50S ribosomal subunit. Interacts with L10 and the large rRNA to form the base of the stalk. L10 forms an elongated spine to which L12 dimers bind in a sequential fashion forming a multimeric L10(L12)X complex. In terms of processing, one or more lysine residues are methylated.

Its function is as follows. Forms part of the ribosomal stalk which helps the ribosome interact with GTP-bound translation factors. The sequence is that of Large ribosomal subunit protein uL11 from Methylobacterium sp. (strain 4-46).